Here is a 245-residue protein sequence, read N- to C-terminus: tRNA (guanine-N(7)-)-methyltransferase (245 aa).

The S-adenosyl-L-methionine site is built by E75, E100, D127, and D150. The active site involves D150. Substrate contacts are provided by residues K154, D186, and 223–226 (TKFE).

It belongs to the class I-like SAM-binding methyltransferase superfamily. TrmB family.

The catalysed reaction is guanosine(46) in tRNA + S-adenosyl-L-methionine = N(7)-methylguanosine(46) in tRNA + S-adenosyl-L-homocysteine. Its pathway is tRNA modification; N(7)-methylguanine-tRNA biosynthesis. Catalyzes the formation of N(7)-methylguanine at position 46 (m7G46) in tRNA. This Photobacterium profundum (strain SS9) protein is tRNA (guanine-N(7)-)-methyltransferase.